The primary structure comprises 166 residues: Large ribosomal subunit protein uL10 (166 aa).

It belongs to the universal ribosomal protein uL10 family. As to quaternary structure, part of the ribosomal stalk of the 50S ribosomal subunit. The N-terminus interacts with L11 and the large rRNA to form the base of the stalk. The C-terminus forms an elongated spine to which L12 dimers bind in a sequential fashion forming a multimeric L10(L12)X complex.

Functionally, forms part of the ribosomal stalk, playing a central role in the interaction of the ribosome with GTP-bound translation factors. In Staphylococcus carnosus (strain TM300), this protein is Large ribosomal subunit protein uL10.